The following is a 199-amino-acid chain: dITP/XTP pyrophosphatase (199 aa).

7 to 12 contacts substrate; that stretch reads SANKGK. Residues aspartate 38 and aspartate 73 each contribute to the Mg(2+) site. Aspartate 73 (proton acceptor) is an active-site residue. Substrate is bound by residues serine 74, 155-158, lysine 178, and 183-184; these read FGYD and HR.

It belongs to the HAM1 NTPase family. Homodimer. The cofactor is Mg(2+).

The catalysed reaction is XTP + H2O = XMP + diphosphate + H(+). It carries out the reaction dITP + H2O = dIMP + diphosphate + H(+). It catalyses the reaction ITP + H2O = IMP + diphosphate + H(+). Its function is as follows. Pyrophosphatase that catalyzes the hydrolysis of nucleoside triphosphates to their monophosphate derivatives, with a high preference for the non-canonical purine nucleotides XTP (xanthosine triphosphate), dITP (deoxyinosine triphosphate) and ITP. Seems to function as a house-cleaning enzyme that removes non-canonical purine nucleotides from the nucleotide pool, thus preventing their incorporation into DNA/RNA and avoiding chromosomal lesions. The polypeptide is dITP/XTP pyrophosphatase (Aliarcobacter butzleri (strain RM4018) (Arcobacter butzleri)).